We begin with the raw amino-acid sequence, 191 residues long: UPF0312 protein Sbal195_3198 (191 aa).

An N-terminal signal peptide occupies residues 1 to 22 (MKKQLFSALIGASLLAPMAASA).

The protein belongs to the UPF0312 family. Type 1 subfamily.

The protein localises to the periplasm. The polypeptide is UPF0312 protein Sbal195_3198 (Shewanella baltica (strain OS195)).